Consider the following 860-residue polypeptide: Elastin (860 aa).

The N-terminal stretch at 1-27 (MAGLTAVVPQPGVLLILLLNLLHPAQP) is a signal peptide. Residues Pro-35 and Pro-72 each carry the 4-hydroxyproline modification. Residue Pro-84 is modified to Hydroxyproline. Pro-105 is modified (4-hydroxyproline). 2 positions are modified to allysine: Lys-123 and Lys-127. Pro-217, Pro-230, Pro-233, and Pro-253 each carry 4-hydroxyproline. Allysine is present on residues Lys-299, Lys-318, and Lys-321. Pro-346 is modified (4-hydroxyproline). Lys-368 and Lys-371 each carry allysine. A Hydroxyproline modification is found at Pro-383. Residues Pro-399 and Pro-405 each carry the 4-hydroxyproline modification. Hydroxyproline is present on residues Pro-410 and Pro-415. An allysine mark is found at Lys-431, Lys-435, Lys-438, Lys-481, and Lys-484. Residues Pro-498 and Pro-519 each carry the 4-hydroxyproline modification. Residues Lys-534, Lys-595, Lys-599, and Lys-603 each carry the allysine modification. A 4-hydroxyproline mark is found at Pro-617, Pro-626, Pro-644, Pro-653, and Pro-661. 2 positions are modified to allysine: Lys-668 and Lys-671. Pro-702 is subject to 4-hydroxyproline. 4 positions are modified to allysine: Lys-719, Lys-723, Lys-783, and Lys-786. A 4-hydroxyproline modification is found at Pro-832. A disulfide bridge connects residues Cys-850 and Cys-855.

The protein belongs to the elastin family. In terms of assembly, the polymeric elastin chains are cross-linked together into an extensible 3D network. Forms a ternary complex with BGN and MFAP2. Interacts with MFAP2 via divalent cations (calcium &gt; magnesium &gt; manganese) in a dose-dependent and saturating manner. Interacts with FBLN5 and FBN1. Forms a ternary complex with FBN1 and FBLN2 or FBLN5. Interacts with MFAP4 in a Ca (2+)-dependent manner; this interaction promotes ELN self-assembly. Interacts with EFEMP2 with moderate affinity. In terms of processing, elastin is formed through the cross-linking of its soluble precursor tropoelastin. Cross-linking is initiated through the action of lysyl oxidase on exposed lysines to form allysine. Subsequent spontaneous condensation reactions with other allysine or unmodified lysine residues result in various bi-, tri-, and tetrafunctional cross-links. The most abundant cross-links in mature elastin fibers are lysinonorleucine, allysine aldol, desmosine, and isodesmosine. Hydroxylation on proline residues within the sequence motif, GXPG, is most likely to be 4-hydroxy as this fits the requirement for 4-hydroxylation in vertebrates.

Its subcellular location is the secreted. The protein resides in the extracellular space. It is found in the extracellular matrix. Its function is as follows. Major structural protein of tissues such as aorta and nuchal ligament, which must expand rapidly and recover completely. Molecular determinant of the late arterial morphogenesis, stabilizing arterial structure by regulating proliferation and organization of vascular smooth muscle. The chain is Elastin (Eln) from Mus musculus (Mouse).